The following is a 545-amino-acid chain: Glucose-6-phosphate isomerase (545 aa).

The Proton donor role is filled by Glu-351. Residues His-382 and Lys-510 contribute to the active site.

Belongs to the GPI family.

Its subcellular location is the cytoplasm. The enzyme catalyses alpha-D-glucose 6-phosphate = beta-D-fructose 6-phosphate. It participates in carbohydrate biosynthesis; gluconeogenesis. The protein operates within carbohydrate degradation; glycolysis; D-glyceraldehyde 3-phosphate and glycerone phosphate from D-glucose: step 2/4. Its function is as follows. Catalyzes the reversible isomerization of glucose-6-phosphate to fructose-6-phosphate. The sequence is that of Glucose-6-phosphate isomerase from Shewanella sp. (strain MR-7).